The following is a 248-amino-acid chain: MSFVVIIPARYASTRLPGKPLVDINGKPMIVHVLERARESGADRIIVATDHEDVARAVEAAGGEVCMTRADHQSGTERLAEVVEKCAFSDDTVIVNVQGDEPMIPATIIRQVADNLAQRQVGMATLAVPIHNAEEAFNPNAVKVVLDAEGYALYFSRATIPWDRDRFAEGLETVGDNFLRHLGIYGYRAGFIRRYVNWQPSPLEHIEMLEQLRVLWYGEKIHVAVAQEVPGTGVDTPEDLERVRAEMR.

This sequence belongs to the KdsB family.

It localises to the cytoplasm. It catalyses the reaction 3-deoxy-alpha-D-manno-oct-2-ulosonate + CTP = CMP-3-deoxy-beta-D-manno-octulosonate + diphosphate. The protein operates within nucleotide-sugar biosynthesis; CMP-3-deoxy-D-manno-octulosonate biosynthesis; CMP-3-deoxy-D-manno-octulosonate from 3-deoxy-D-manno-octulosonate and CTP: step 1/1. Its pathway is bacterial outer membrane biogenesis; lipopolysaccharide biosynthesis. Activates KDO (a required 8-carbon sugar) for incorporation into bacterial lipopolysaccharide in Gram-negative bacteria. This Escherichia coli O139:H28 (strain E24377A / ETEC) protein is 3-deoxy-manno-octulosonate cytidylyltransferase.